Consider the following 52-residue polypeptide: Large ribosomal subunit protein bL32c (52 aa).

The protein belongs to the bacterial ribosomal protein bL32 family.

The protein resides in the plastid. It is found in the chloroplast. This chain is Large ribosomal subunit protein bL32c, found in Nymphaea alba (White water-lily).